We begin with the raw amino-acid sequence, 261 residues long: Tryptophan synthase alpha chain (261 aa).

Active-site proton acceptor residues include Glu47 and Asp58.

It belongs to the TrpA family. In terms of assembly, tetramer of two alpha and two beta chains.

The enzyme catalyses (1S,2R)-1-C-(indol-3-yl)glycerol 3-phosphate + L-serine = D-glyceraldehyde 3-phosphate + L-tryptophan + H2O. It participates in amino-acid biosynthesis; L-tryptophan biosynthesis; L-tryptophan from chorismate: step 5/5. Its function is as follows. The alpha subunit is responsible for the aldol cleavage of indoleglycerol phosphate to indole and glyceraldehyde 3-phosphate. The chain is Tryptophan synthase alpha chain from Neisseria gonorrhoeae (strain ATCC 700825 / FA 1090).